The following is a 300-amino-acid chain: Alpha-tubulin N-acetyltransferase 1 (300 aa).

Residues 1–190 (MEFPFDVDAL…NNFVIFEGFF (190 aa)) enclose the N-acetyltransferase domain. Lysine 56 bears the N6-acetyllysine; by autocatalysis mark. Residue 124-137 (FYIHESLQRHGHGR) participates in acetyl-CoA binding. N6-acetyllysine; by autocatalysis is present on lysine 146. Residue 160-169 (SQKLLKFLNK) coordinates acetyl-CoA. An N6-acetyllysine; by autocatalysis mark is found at lysine 210 and lysine 221. Disordered stretches follow at residues 229-263 (PLNRAPRRATPPAHPPPRSSSLGNSPERGPLRPFV) and 280-300 (TARLLLATDPGGSPAQRRRTR). Residues serine 249 and serine 253 each carry the phosphoserine modification. Arginine 282 is modified (asymmetric dimethylarginine). The residue at position 292 (serine 292) is a Phosphoserine. The residue at position 300 (arginine 300) is an Omega-N-methylarginine.

The protein belongs to the acetyltransferase ATAT1 family. Component of the BBSome complex. Interacts with AP2 alpha-adaptins, including AP2A2, but not with AP1 gamma-adaptin (AP1G1/AP1G2); this interaction is required for efficient alpha-tubulin acetylation, hence clathrin-coated pits are sites of microtubule acetylation. In terms of processing, autoacetylation strongly increases tubulin acetylation.

It is found in the cytoplasm. Its subcellular location is the membrane. The protein localises to the clathrin-coated pit. The protein resides in the cell junction. It localises to the focal adhesion. It is found in the cell projection. Its subcellular location is the axon. The protein localises to the cytoskeleton. The protein resides in the spindle. The catalysed reaction is L-lysyl-[alpha-tubulin] + acetyl-CoA = N(6)-acetyl-L-lysyl-[alpha-tubulin] + CoA + H(+). Functionally, specifically acetylates 'Lys-40' in alpha-tubulin on the lumenal side of microtubules. Promotes microtubule destabilization and accelerates microtubule dynamics; this activity may be independent of acetylation activity. Acetylates alpha-tubulin with a slow enzymatic rate, due to a catalytic site that is not optimized for acetyl transfer. Enters the microtubule through each end and diffuses quickly throughout the lumen of microtubules. Acetylates only long/old microtubules because of its slow acetylation rate since it does not have time to act on dynamically unstable microtubules before the enzyme is released. Required for normal sperm flagellar function. Promotes directional cell locomotion and chemotaxis, through AP2A2-dependent acetylation of alpha-tubulin at clathrin-coated pits that are concentrated at the leading edge of migrating cells. May facilitate primary cilium assembly. This Sus scrofa (Pig) protein is Alpha-tubulin N-acetyltransferase 1.